A 295-amino-acid chain; its full sequence is Ornithine carbamoyltransferase, catabolic (295 aa).

Carbamoyl phosphate-binding positions include 49-52, Gln-76, Arg-100, and 127-130; these read STRT and HPCQ. L-ornithine contacts are provided by residues Asn-155, Asp-213, and 217-218; that span reads SM. Carbamoyl phosphate contacts are provided by residues 253–254 and Arg-281; that span reads CL.

This sequence belongs to the aspartate/ornithine carbamoyltransferase superfamily. OTCase family. In terms of assembly, homohexamer.

It is found in the cytoplasm. The enzyme catalyses carbamoyl phosphate + L-ornithine = L-citrulline + phosphate + H(+). Its pathway is amino-acid degradation; L-arginine degradation via ADI pathway; carbamoyl phosphate from L-arginine: step 2/2. Arginine lead to a slight activation. Inhibited by all nucleotide phosphates. Functionally, reversibly catalyzes the transfer of the carbamoyl group from carbamoyl phosphate (CP) to the N(epsilon) atom of ornithine (ORN) to produce L-citrulline. This chain is Ornithine carbamoyltransferase, catabolic (arcB), found in Halobacterium salinarum (strain ATCC 700922 / JCM 11081 / NRC-1) (Halobacterium halobium).